Consider the following 404-residue polypeptide: Corticosteroid-binding globulin (404 aa).

The N-terminal stretch at 1-22 is a signal peptide; sequence MLPTLYTCLLWLSTSGLWTVQA. 3 N-linked (GlcNAc...) asparagine glycosylation sites follow: Asn-95, Asn-119, and Asn-175. Gln-253 lines the cortisol pocket. N-linked (GlcNAc...) asparagine glycosylation occurs at Asn-259. Position 285 (Gln-285) interacts with cortisol. The N-linked (GlcNAc...) asparagine glycan is linked to Asn-326. Residue Trp-392 coordinates cortisol.

This sequence belongs to the serpin family. In terms of processing, glycosylation in position Asn-259 is needed for steroid binding.

Its subcellular location is the secreted. In terms of biological role, major transport protein for glucocorticoids and progestins in the blood of almost all vertebrate species. The chain is Corticosteroid-binding globulin (SERPINA6) from Bos taurus (Bovine).